We begin with the raw amino-acid sequence, 177 residues long: Probable adenylyl-sulfate kinase (177 aa).

ATP is bound at residue 12–19 (GLSGAGKT). S86 acts as the Phosphoserine intermediate in catalysis.

It belongs to the APS kinase family.

It catalyses the reaction adenosine 5'-phosphosulfate + ATP = 3'-phosphoadenylyl sulfate + ADP + H(+). It participates in sulfur metabolism; hydrogen sulfide biosynthesis; sulfite from sulfate: step 2/3. Catalyzes the synthesis of activated sulfate. The protein is Probable adenylyl-sulfate kinase (cysC) of Synechocystis sp. (strain ATCC 27184 / PCC 6803 / Kazusa).